The sequence spans 304 residues: Oxygen-dependent coproporphyrinogen-III oxidase (304 aa).

Ser93 lines the substrate pocket. A divalent metal cation-binding residues include His97 and His107. His107 acts as the Proton donor in catalysis. 109-111 (NVR) is a binding site for substrate. Residues His146 and His176 each coordinate a divalent metal cation. Residues 241 to 276 (YVEFNLVYDRGTLFGLQSGGRTESILMSLPPQVRWG) form an important for dimerization region. Position 259–261 (259–261 (GGR)) interacts with substrate.

It belongs to the aerobic coproporphyrinogen-III oxidase family. In terms of assembly, homodimer. Requires a divalent metal cation as cofactor.

The protein resides in the cytoplasm. The enzyme catalyses coproporphyrinogen III + O2 + 2 H(+) = protoporphyrinogen IX + 2 CO2 + 2 H2O. It functions in the pathway porphyrin-containing compound metabolism; protoporphyrin-IX biosynthesis; protoporphyrinogen-IX from coproporphyrinogen-III (O2 route): step 1/1. Its function is as follows. Involved in the heme biosynthesis. Catalyzes the aerobic oxidative decarboxylation of propionate groups of rings A and B of coproporphyrinogen-III to yield the vinyl groups in protoporphyrinogen-IX. The protein is Oxygen-dependent coproporphyrinogen-III oxidase of Pseudomonas syringae pv. tomato (strain ATCC BAA-871 / DC3000).